The primary structure comprises 513 residues: UDP-N-acetylmuramyl-tripeptide synthetase (513 aa).

Serine 38 contacts UDP-N-acetyl-alpha-D-muramoyl-L-alanyl-D-glutamate. 115-121 (GTKGKTT) is an ATP binding site. Residues 161–162 (TT), serine 188, and arginine 196 each bind UDP-N-acetyl-alpha-D-muramoyl-L-alanyl-D-glutamate. Lysine 230 carries the N6-carboxylysine modification.

Belongs to the MurCDEF family. MurE subfamily. In terms of processing, carboxylation is probably crucial for Mg(2+) binding and, consequently, for the gamma-phosphate positioning of ATP.

The protein localises to the cytoplasm. Its pathway is cell wall biogenesis; peptidoglycan biosynthesis. In terms of biological role, catalyzes the addition of an amino acid to the nucleotide precursor UDP-N-acetylmuramoyl-L-alanyl-D-glutamate (UMAG) in the biosynthesis of bacterial cell-wall peptidoglycan. This chain is UDP-N-acetylmuramyl-tripeptide synthetase, found in Latilactobacillus sakei subsp. sakei (strain 23K) (Lactobacillus sakei subsp. sakei).